A 216-amino-acid chain; its full sequence is MVKSSLQRILNSHCFAREKEGNKRNDAMPLLSIPSSSESSRASFNCCSNLGPGPRWCSDVPHPPLKIPGGRGNSQRDHNLSANLFYSDNRLNITEELTSNNRTRILNVQSSLTDGKQVSWRAVLNNNNLYIEIPSGTLPDGSKDSFAILLEYAEEQLQVDHVFICFHKNRDDRAMLLRTFRFLGFEIVIPGHPLVPKRPDACFMAYTFERDSSDED.

The protein belongs to the ODC antizyme family. As to quaternary structure, interacts with ODC1 and thereby sterically blocks ODC homodimerization.

Its function is as follows. Ornithine decarboxylase (ODC) antizyme protein that negatively regulates ODC activity and intracellular polyamine biosynthesis and uptake in response to increased intracellular polyamine levels. Binds to ODC monomers, inhibiting the assembly of the functional ODC homodimer, and targets the monomers for ubiquitin-independent proteolytic destruction by the 26S proteasome. This chain is Ornithine decarboxylase antizyme 1 (oaz1), found in Xenopus laevis (African clawed frog).